The chain runs to 1166 residues: IQ domain-containing protein N (1166 aa).

The segment covering 1-19 (MQPATQLQFTNHLSPNGQC) has biased composition (polar residues). Residues 1–56 (MQPATQLQFTNHLSPNGQCILQPPPTPSLPDKMEKAPPQPQHEGLKSEEHLPQQPA) are disordered. Residues 89-118 (HARAATLIQANWRGYRLRQKLISQMTAAKA) enclose the IQ 1 domain. Disordered regions lie at residues 431–450 (VCPGPAMAKTPPQTHPVATP), 769–797 (LSAPPWAKPEDRWTQPKPHGHVPGKTTQG), and 829–848 (DSGATRAQPSMPSQVVPCQE). IQ domains are found at residues 907–932 (AVTTIQAGVRGYLVRRRIRVWHRRAT), 928–955 (HRRATVIQATWRGYRMRRNLAHLCRATT), 952–979 (RATTIIQAAWRGYSTRRDQARHRQMLHP), 1091–1119 (RDKAATAIQSAWRGFKIRQQMRQQQMAAK), and 1114–1143 (QQMAAKMVQATWRGHHTRSCLKSTEALLGP). The disordered stretch occupies residues 1145–1166 (DPWSSSQHMHWASSQHTHWPGI). Polar residues predominate over residues 1147 to 1166 (WSSSQHMHWASSQHTHWPGI).

In terms of assembly, interacts with calmodulin.

In terms of biological role, essential for spermiogenesis and fertilization. May be required for manchette assembly in elongating spermatids. This Macaca fascicularis (Crab-eating macaque) protein is IQ domain-containing protein N (IQCN).